The chain runs to 650 residues: Threonine--tRNA ligase (650 aa).

Positions 3–65 (DLVKVTLPDG…ERDARLEIVT (63 aa)) constitute a TGS domain. The interval 248–548 (DHRRLGPQLG…LVEHYAGAFP (301 aa)) is catalytic. Residues cysteine 349, histidine 400, and histidine 525 each coordinate Zn(2+).

It belongs to the class-II aminoacyl-tRNA synthetase family. As to quaternary structure, homodimer. Requires Zn(2+) as cofactor.

It localises to the cytoplasm. It catalyses the reaction tRNA(Thr) + L-threonine + ATP = L-threonyl-tRNA(Thr) + AMP + diphosphate + H(+). In terms of biological role, catalyzes the attachment of threonine to tRNA(Thr) in a two-step reaction: L-threonine is first activated by ATP to form Thr-AMP and then transferred to the acceptor end of tRNA(Thr). Also edits incorrectly charged L-seryl-tRNA(Thr). The polypeptide is Threonine--tRNA ligase (Anaeromyxobacter dehalogenans (strain 2CP-1 / ATCC BAA-258)).